The sequence spans 222 residues: Small ribosomal subunit protein uS3 (222 aa).

The region spanning 39 to 108 (IRRHIKEKLY…TISLDIKEIK (70 aa)) is the KH type-2 domain.

This sequence belongs to the universal ribosomal protein uS3 family. As to quaternary structure, part of the 30S ribosomal subunit. Forms a tight complex with proteins S10 and S14.

Its function is as follows. Binds the lower part of the 30S subunit head. Binds mRNA in the 70S ribosome, positioning it for translation. The sequence is that of Small ribosomal subunit protein uS3 from Caldicellulosiruptor saccharolyticus (strain ATCC 43494 / DSM 8903 / Tp8T 6331).